The sequence spans 193 residues: CASP-like protein 2U1 (193 aa).

Over 1–18 (MAMALALGGGQDAERKVK) the chain is Cytoplasmic. Residues 19 to 39 (VAEVALRALLCGLGALAAALV) form a helical membrane-spanning segment. Residues 40–61 (ATDTQTRTFFSLQKKASYTDMK) are Extracellular-facing. The chain crosses the membrane as a helical span at residues 62 to 82 (AMVFLVDAAAVAAGYSLLQLA). Residues 83–113 (ARCCGGGAMSSGRGDGGGRGRALSWCVFSCD) lie on the Cytoplasmic side of the membrane. Residues 114–134 (QALAYVLLAAVAAALQASVVA) traverse the membrane as a helical segment. At 135–156 (KRGQPELQWMGICALYGAFCRQ) the chain is on the extracellular side. Residues 157 to 177 (AGAGLATAVVAGLAAVLLAFL) form a helical membrane-spanning segment. Residues 178 to 193 (SAFNLFRLYGSGGTKS) are Cytoplasmic-facing.

The protein belongs to the Casparian strip membrane proteins (CASP) family. In terms of assembly, homodimer and heterodimers.

The protein localises to the cell membrane. The chain is CASP-like protein 2U1 from Sorghum bicolor (Sorghum).